Reading from the N-terminus, the 392-residue chain is Nuclear speckle splicing regulatory protein 1 homolog (392 aa).

3 disordered regions span residues 1 to 73 (MASK…IFDY), 113 to 169 (RQLE…AFND), and 187 to 357 (LLND…ARLD). Basic and acidic residues-rich tracts occupy residues 54–65 (KAAEREHQKAEA), 113–132 (RQLE…REKE), 149–160 (KQQEEVKKHREQ), 205–238 (QKNV…KSIY), and 313–357 (KSIE…ARLD). Residues 76-132 (NYDEIQAIKNEKKEEARKADKNRESKYAENIIKAHARRQLEQFSREERQQLREREKE) adopt a coiled-coil conformation.

It belongs to the NSRP1 family. As to expression, expressed in the intestine, nervous system and head neurons in both larvae and adults. Expressed in the distal tip cell.

Its subcellular location is the cytoplasm. It is found in the nucleus. Its function is as follows. Required for the cessation of distal tip cell migration at the end of larval morphogenesis. The protein is Nuclear speckle splicing regulatory protein 1 homolog (ccdc-55) of Caenorhabditis elegans.